The chain runs to 102 residues: Small ribosomal subunit protein uS10 (102 aa).

The protein belongs to the universal ribosomal protein uS10 family. As to quaternary structure, part of the 30S ribosomal subunit.

Involved in the binding of tRNA to the ribosomes. The chain is Small ribosomal subunit protein uS10 from Leifsonia xyli subsp. xyli (strain CTCB07).